The following is a 430-amino-acid chain: CinA-like protein (430 aa).

This sequence belongs to the CinA family.

The sequence is that of CinA-like protein from Mycobacterium tuberculosis (strain ATCC 25177 / H37Ra).